We begin with the raw amino-acid sequence, 45 residues long: Putative UPF0377 protein YJL222W-B (45 aa).

Belongs to the UPF0377 family.

The chain is Putative UPF0377 protein YJL222W-B from Saccharomyces cerevisiae (strain ATCC 204508 / S288c) (Baker's yeast).